Here is a 33-residue protein sequence, read N- to C-terminus: Protein YdgV (33 aa).

The sequence is that of Protein YdgV from Escherichia coli (strain K12).